Consider the following 268-residue polypeptide: Taurine import ATP-binding protein TauB (268 aa).

Residues 4 to 236 form the ABC transporter domain; that stretch reads LSIENISMRF…MGVNADLREV (233 aa). 41–48 contributes to the ATP binding site; it reads GPSGCGKT.

This sequence belongs to the ABC transporter superfamily. Taurine importer (TC 3.A.1.17.1) family. In terms of assembly, the complex is composed of two ATP-binding proteins (TauB), two transmembrane proteins (TauC) and a solute-binding protein (TauA).

It localises to the cell inner membrane. The catalysed reaction is taurine(out) + ATP + H2O = taurine(in) + ADP + phosphate + H(+). Its function is as follows. Part of the ABC transporter complex TauABC involved in taurine import. Responsible for energy coupling to the transport system. This chain is Taurine import ATP-binding protein TauB, found in Ruegeria pomeroyi (strain ATCC 700808 / DSM 15171 / DSS-3) (Silicibacter pomeroyi).